The primary structure comprises 200 residues: Protein Nef (200 aa).

Gly-2 carries N-myristoyl glycine; by host lipidation. Ser-6 carries the post-translational modification Phosphoserine; by host. Positions 58-60 (EEE) are acidic; interacts with host PACS1 and PACS2; stabilizes the interaction of NEF/MHC-I with host AP1M1; necessary for MHC-I internalization. The segment at 64–73 (PVRPQVPLRP) is SH3-binding; interaction with Src family tyrosine kinases. The PxxP; stabilizes the interaction of NEF/MHC-I with host AP1M1; necessary for MHC-I internalization motif lies at 67–70 (PQVP). The segment at 103–119 (EILDLWVYHTQGYFPDW) is mediates dimerization, Nef-PTE1 interaction. The interval 143 to 175 (VDPEEIEKANEGENNCLLHPISLHGMEDEDREV) is binding to ATP6V1H. The Dileucine internalization motif; necessary for CD4 internalization motif lies at 159 to 160 (LL). Residues 169 to 170 (ED) carry the Diacidic; necessary for CD4 internalization motif.

The protein belongs to the lentivirus primate group Nef protein family. As to quaternary structure, monomer; cytosolic form. Homodimer; membrane bound form. Interacts with Nef associated p21-activated kinase (PAK2); this interaction activates PAK2. Associates with the Nef-MHC-I-AP1 complex; this complex is required for MHC-I internalization. Interacts (via C-terminus) with host PI3-kinase. Interacts with host PACS1; this interaction seems to be weak. Interacts with host PACS2. Interacts with host LCK and MAPK3; these interactions inhibit the kinase activity of the latter. Interacts with host ATP6V1H; this interaction may play a role in CD4 endocytosis. Associates with the CD4-Nef-AP2 complex; this complex is required for CD4 internalization. Interacts with host AP2 subunit alpha and AP2 subunit sigma2. Interacts with TCR-zeta chain; this interaction up-regulates the Fas ligand (FasL) surface expression. Interacts with host HCK, LYN, and SRC; these interactions activate the Src family kinases. Interacts with MAP3K5; this interaction inhibits the Fas and TNFR-mediated death signals. Interacts with beta-COP and PTE1. Interacts with human RACK1; this increases Nef phosphorylation by PKC. Interacts with TP53; this interaction decreases the half-life of TP53, protecting the infected cell against p53-mediated apoptosis. Post-translationally, the virion-associated Nef proteins are cleaved by the viral protease to release the soluble C-terminal core protein. Nef is probably cleaved concomitantly with viral structural proteins on maturation of virus particles. In terms of processing, myristoylated. Phosphorylated on serine residues, probably by host PKCdelta and theta.

It is found in the host cell membrane. Its subcellular location is the virion. It localises to the secreted. The protein resides in the host Golgi apparatus membrane. Functionally, factor of infectivity and pathogenicity, required for optimal virus replication. Alters numerous pathways of T-lymphocyte function and down-regulates immunity surface molecules in order to evade host defense and increase viral infectivity. Alters the functionality of other immunity cells, like dendritic cells, monocytes/macrophages and NK cells. In infected CD4(+) T-lymphocytes, down-regulates the surface MHC-I, mature MHC-II, CD4, CD28, CCR5 and CXCR4 molecules. Mediates internalization and degradation of host CD4 through the interaction of with the cytoplasmic tail of CD4, the recruitment of AP-2 (clathrin adapter protein complex 2), internalization through clathrin coated pits, and subsequent transport to endosomes and lysosomes for degradation. Diverts host MHC-I molecules to the trans-Golgi network-associated endosomal compartments by an endocytic pathway to finally target them for degradation. MHC-I down-regulation may involve AP-1 (clathrin adapter protein complex 1) or possibly Src family kinase-ZAP70/Syk-PI3K cascade recruited by PACS2. In consequence infected cells are masked for immune recognition by cytotoxic T-lymphocytes. Decreasing the number of immune receptors also prevents reinfection by more HIV particles (superinfection). Down-regulates host SERINC3 and SERINC5 thereby excluding these proteins from the viral particles. Virion infectivity is drastically higher when SERINC3 or SERINC5 are excluded from the viral envelope, because these host antiviral proteins impair the membrane fusion event necessary for subsequent virion penetration. Its function is as follows. Bypasses host T-cell signaling by inducing a transcriptional program nearly identical to that of anti-CD3 cell activation. Interaction with TCR-zeta chain up-regulates the Fas ligand (FasL). Increasing surface FasL molecules and decreasing surface MHC-I molecules on infected CD4(+) cells send attacking cytotoxic CD8+ T-lymphocytes into apoptosis. In terms of biological role, plays a role in optimizing the host cell environment for viral replication without causing cell death by apoptosis. Protects the infected cells from apoptosis in order to keep them alive until the next virus generation is ready to strike. Inhibits the Fas and TNFR-mediated death signals by blocking MAP3K5/ASK1. Decreases the half-life of TP53, protecting the infected cell against p53-mediated apoptosis. Inhibits the apoptotic signals regulated by the Bcl-2 family proteins through the formation of a Nef/PI3-kinase/PAK2 complex that leads to activation of PAK2 and induces phosphorylation of host BAD. Functionally, extracellular Nef protein targets CD4(+) T-lymphocytes for apoptosis by interacting with CXCR4 surface receptors. This chain is Protein Nef, found in Human immunodeficiency virus type 1 group M subtype F2 (isolate MP255) (HIV-1).